Here is a 434-residue protein sequence, read N- to C-terminus: ATP phosphoribosyltransferase regulatory subunit (434 aa).

A disordered region spans residues 1–48 (MYGRGSGAEHSRGSGAEHFWDPRPEASSTVSSSLRPPSGARDLLPREV). Low complexity predominate over residues 27-38 (SSTVSSSLRPPS).

It belongs to the class-II aminoacyl-tRNA synthetase family. HisZ subfamily. Heteromultimer composed of HisG and HisZ subunits.

It is found in the cytoplasm. It functions in the pathway amino-acid biosynthesis; L-histidine biosynthesis; L-histidine from 5-phospho-alpha-D-ribose 1-diphosphate: step 1/9. Functionally, required for the first step of histidine biosynthesis. May allow the feedback regulation of ATP phosphoribosyltransferase activity by histidine. The polypeptide is ATP phosphoribosyltransferase regulatory subunit (Synechococcus sp. (strain JA-2-3B'a(2-13)) (Cyanobacteria bacterium Yellowstone B-Prime)).